Here is a 600-residue protein sequence, read N- to C-terminus: Alanine--tRNA ligase (600 aa).

Positions 463, 467, 565, and 569 each coordinate Zn(2+).

It belongs to the class-II aminoacyl-tRNA synthetase family. Zn(2+) is required as a cofactor.

It is found in the cytoplasm. The catalysed reaction is tRNA(Ala) + L-alanine + ATP = L-alanyl-tRNA(Ala) + AMP + diphosphate. Catalyzes the attachment of alanine to tRNA(Ala) in a two-step reaction: alanine is first activated by ATP to form Ala-AMP and then transferred to the acceptor end of tRNA(Ala). Also edits incorrectly charged Ser-tRNA(Ala) and Gly-tRNA(Ala) via its editing domain. This is Alanine--tRNA ligase (alaS) from Treponema denticola (strain ATCC 35405 / DSM 14222 / CIP 103919 / JCM 8153 / KCTC 15104).